A 322-amino-acid polypeptide reads, in one-letter code: MSESAEHLKDEGSKTQSMIAGATAGLIARFVIAPLDVVKIRLQLQSHSASDPLSQRDLRGSPIYKGTIPTIKRIFREEGLAALWKGNVPAELMYVSYSAIQFTTYRSVTLGLQDAFGEHRLPAAAESFIAGASAGAVATTATYPLDLLRTRFAAQGIERVYTSLRSSIRDIAISEGPRGFFQGLGAGVGQIVPYMGIFFATYESLRLPMGTLNMPFGSADASAGVIASVIAKTGIFPFDLIRKRLQVQGPTRERYVHKNIPVYNGVFQTMRHILHNEGYRGLYRGLTVSLFKSAPASAVTMWTYERVLGILLKWEKSQELSK.

3 Solcar repeats span residues 12–111 (GSKT…VTLG), 122–208 (PAAA…LRLP), and 215–310 (PFGS…VLGI). A run of 6 helical transmembrane segments spans residues 18-38 (MIAG…LDVV), 92-108 (LMYV…YRSV), 128-148 (FIAG…LDLL), 180-200 (FFQG…IFFA), 221-241 (ASAG…FDLI), and 285-302 (GLTV…VTMW).

It belongs to the mitochondrial carrier (TC 2.A.29) family.

It is found in the mitochondrion inner membrane. Mitochondrial transporter that mediates uptake of thiamine pyrophosphate (ThPP) into mitochondria. This is Mitochondrial thiamine pyrophosphate carrier 1 (tpc1) from Botryotinia fuckeliana (strain B05.10) (Noble rot fungus).